Consider the following 407-residue polypeptide: 1-deoxy-D-xylulose 5-phosphate reductoisomerase (407 aa).

Residues Thr25, Gly26, Ser27, Ile28, Asn53, and Asn136 each contribute to the NADPH site. Lys137 lines the 1-deoxy-D-xylulose 5-phosphate pocket. NADPH is bound at residue Glu138. Position 162 (Asp162) interacts with Mn(2+). Residues Ser163, Glu164, Ser188, and His211 each coordinate 1-deoxy-D-xylulose 5-phosphate. Residue Glu164 participates in Mn(2+) binding. Gly217 is an NADPH binding site. 1-deoxy-D-xylulose 5-phosphate contacts are provided by Ser224, Asn229, Lys230, and Glu233. Residue Glu233 participates in Mn(2+) binding.

It belongs to the DXR family. Mg(2+) is required as a cofactor. It depends on Mn(2+) as a cofactor.

It catalyses the reaction 2-C-methyl-D-erythritol 4-phosphate + NADP(+) = 1-deoxy-D-xylulose 5-phosphate + NADPH + H(+). It participates in isoprenoid biosynthesis; isopentenyl diphosphate biosynthesis via DXP pathway; isopentenyl diphosphate from 1-deoxy-D-xylulose 5-phosphate: step 1/6. Catalyzes the NADPH-dependent rearrangement and reduction of 1-deoxy-D-xylulose-5-phosphate (DXP) to 2-C-methyl-D-erythritol 4-phosphate (MEP). This chain is 1-deoxy-D-xylulose 5-phosphate reductoisomerase, found in Rhodopseudomonas palustris (strain BisB18).